The following is a 236-amino-acid chain: Protein CUSTOS (236 aa).

Disordered stretches follow at residues methionine 1 to proline 57 and valine 83 to glutamate 236. 2 stretches are compositionally biased toward basic and acidic residues: residues asparagine 10–asparagine 51 and glutamate 156–glutamate 165. The Nucleolar localization signal (NLS1) signature appears at lysine 173–lysine 181. Basic and acidic residues predominate over residues threonine 182–glutamate 196. A compositionally biased stretch (polar residues) spans lysine 197–alanine 210. The Nucleolar localization signal (NLS2) signature appears at glycine 211 to lysine 219. Over residues leucine 214–lysine 227 the composition is skewed to basic residues.

It belongs to the CUSTOS family. As to quaternary structure, interacts (via NLS1 and NLS2) with dvl2; the interaction is negatively regulated by Wnt stimulation. Interacts with csnk1a1. Interacts with ctnnb1; the interaction is positively regulated by Wnt stimulation. Phosphorylated by ck1/csnk1a1.

The protein resides in the nucleus envelope. Its function is as follows. Essential for Spemann-Mangold organizer formation and subsequent anterior head development in the embryo. Inhibits canonical Wnt signaling pathway by antagonizing nuclear import of beta-catenin (ctnnb1) during embryogenesis. In Danio rerio (Zebrafish), this protein is Protein CUSTOS.